We begin with the raw amino-acid sequence, 354 residues long: Decorin (354 aa).

Residues 1 to 16 (MKATLVLFLLAQVSWA) form the signal peptide. The propeptide occupies 17-30 (GPFEQRGLFDFMLE). O-linked (Xyl...) (glycosaminoglycan) serine glycosylation is present at Ser-34. 2 disulfide bridges follow: Cys-49–Cys-55 and Cys-53–Cys-62. LRR repeat units follow at residues 68–88 (DKVPWEFPPDTTLLDLQNNKI), 89–112 (TEIKEGAFKNLKDLHTLILVNNKI), 113–136 (SKISPEAFKPLVKLERLYLSKNHL), 137–157 (KELPEKLPKTLQELRLHDNEI), 158–181 (TKLKKSVFNGLNRMIVIELGGNPL), 182–207 (KNSGIENGALQGMKGLGYIRISDTNI), 208–228 (TAIPQGLPTSISELHLDGNKI), 229–252 (AKVDAASLKGMSNLSKLGLSFNSI), 253–276 (TVVENGSLANVPHLRELHLDNNKL), 277–299 (LRVPAGLAQHKYVQVVYLHNNNI), 300–329 (SEVGQHDFCLPSYQTRKTSYTAVSLYSNPV), and 330–354 (RYWQIHPHTFRCVFGRSTIQLGNYK). N-linked (GlcNAc...) asparagine glycosylation occurs at Asn-206. N-linked (GlcNAc...) asparagine glycans are attached at residues Asn-241, Asn-257, and Asn-298. A disulfide bridge connects residues Cys-308 and Cys-341.

The protein belongs to the small leucine-rich proteoglycan (SLRP) family. SLRP class I subfamily. Binds to type I and type II collagen, fibronectin and TGF-beta. Forms a ternary complex with MFAP2 and ELN. Interacts with DPT. In terms of processing, the attached glycosaminoglycan chain can be either chondroitin sulfate or dermatan sulfate depending upon the tissue of origin.

It localises to the secreted. Its subcellular location is the extracellular space. The protein localises to the extracellular matrix. Its function is as follows. May affect the rate of fibrils formation. May be implicated in the dilatation of the rat cervix. The protein is Decorin (Dcn) of Rattus norvegicus (Rat).